The chain runs to 107 residues: Wound-induced proteinase inhibitor 1 (107 aa).

Positions 1 to 23 (MESKFAHIIVFFLLATSFETLLA) are cleaved as a signal peptide. Residues 24 to 36 (RKESDGPEVIELQ) constitute a propeptide that is removed on maturation.

Belongs to the protease inhibitor I13 (potato type I serine protease inhibitor) family. As to quaternary structure, heterogeneous tetramers of similar chains.

Its function is as follows. Inhibits both chymotrypsin and trypsin. The sequence is that of Wound-induced proteinase inhibitor 1 from Solanum tuberosum (Potato).